A 549-amino-acid chain; its full sequence is uncharacterized protein (549 aa).

Transmembrane regions (helical) follow at residues 1 to 21 (MEIFFTILIMTLVVSLSGVVT), 28 to 48 (IPLPLMQIAIGALLAWPTFGL), 50 to 70 (VEFDPELFLVLFIPPLLFADG), 85 to 105 (IFGLALALVVVTVVGIGFLIY), 106 to 126 (WVVPGIPLIPAFALAAVLSPT), 165 to 185 (FAVAVAMGTMIFTVGGATVEF), 187 to 207 (KVAIGGILAGFVVSWLYGRSL), 222 to 242 (IVLLFLLPFASYLIAEHIGVS), 278 to 298 (LEFVFNGMVFLLLGLQLPGIL), 310 to 330 (NVEIWMLFTNIILIYAALMLV), 361 to 381 (ILIASFAGVRGAITLAGVLSI), and 398 to 418 (VFLAAGVILFSLFVGVVMLPI).

The protein belongs to the monovalent cation:proton antiporter 1 (CPA1) transporter (TC 2.A.36) family.

The protein localises to the cell inner membrane. This is an uncharacterized protein from Escherichia coli (strain K12).